A 311-amino-acid chain; its full sequence is Acetyl-coenzyme A carboxylase carboxyl transferase subunit alpha (311 aa).

Positions 36-286 constitute a CoA carboxyltransferase C-terminal domain; that stretch reads NLEKETQKVY…SDYVLKAIEE (251 aa).

It belongs to the AccA family. In terms of assembly, acetyl-CoA carboxylase is a heterohexamer composed of biotin carboxyl carrier protein (AccB), biotin carboxylase (AccC) and two subunits each of ACCase subunit alpha (AccA) and ACCase subunit beta (AccD).

Its subcellular location is the cytoplasm. The enzyme catalyses N(6)-carboxybiotinyl-L-lysyl-[protein] + acetyl-CoA = N(6)-biotinyl-L-lysyl-[protein] + malonyl-CoA. Its pathway is lipid metabolism; malonyl-CoA biosynthesis; malonyl-CoA from acetyl-CoA: step 1/1. Component of the acetyl coenzyme A carboxylase (ACC) complex. First, biotin carboxylase catalyzes the carboxylation of biotin on its carrier protein (BCCP) and then the CO(2) group is transferred by the carboxyltransferase to acetyl-CoA to form malonyl-CoA. This Campylobacter lari (strain RM2100 / D67 / ATCC BAA-1060) protein is Acetyl-coenzyme A carboxylase carboxyl transferase subunit alpha.